Reading from the N-terminus, the 449-residue chain is Probable glycine dehydrogenase (decarboxylating) subunit 1 (449 aa).

This sequence belongs to the GcvP family. N-terminal subunit subfamily. In terms of assembly, the glycine cleavage system is composed of four proteins: P, T, L and H. In this organism, the P 'protein' is a heterodimer of two subunits.

It catalyses the reaction N(6)-[(R)-lipoyl]-L-lysyl-[glycine-cleavage complex H protein] + glycine + H(+) = N(6)-[(R)-S(8)-aminomethyldihydrolipoyl]-L-lysyl-[glycine-cleavage complex H protein] + CO2. The glycine cleavage system catalyzes the degradation of glycine. The P protein binds the alpha-amino group of glycine through its pyridoxal phosphate cofactor; CO(2) is released and the remaining methylamine moiety is then transferred to the lipoamide cofactor of the H protein. This chain is Probable glycine dehydrogenase (decarboxylating) subunit 1, found in Solibacter usitatus (strain Ellin6076).